A 486-amino-acid chain; its full sequence is ATP-dependent rRNA helicase RRP3 (486 aa).

Residues 1–11 are compositionally biased toward basic residues; sequence MSKVTKQSKSH. The segment at 1 to 52 is disordered; sequence MSKVTKQSKSHKSSELVSLAEKIKQKALENRKQSREESQATEEANTASETEA. Residues 17–49 are a coiled coil; that stretch reads VSLAEKIKQKALENRKQSREESQATEEANTASE. The span at 21 to 38 shows a compositional bias: basic and acidic residues; it reads EKIKQKALENRKQSREES. Residues 41-52 show a composition bias toward low complexity; the sequence is TEEANTASETEA. The Q motif signature appears at 66–94; it reads SSFRELDLVPELIEACDNLNFTKPTPIQS. Residues 97–269 form the Helicase ATP-binding domain; the sequence is IPPALQGKDI…RASLTNPVKC (173 aa). 110–117 is a binding site for ATP; that stretch reads AQTGSGKT. A DEAD box motif is present at residues 216-219; it reads DEAD. Residues 300-446 form the Helicase C-terminal domain; the sequence is LLNEFIGKTT…SIVLSLRDSV (147 aa). A disordered region spans residues 459–486; it reads RRNKEKQTRGKGRRSRTATRENMDKEEE. A compositionally biased stretch (basic and acidic residues) spans 476–486; the sequence is ATRENMDKEEE.

The protein belongs to the DEAD box helicase family. DDX47/RRP3 subfamily. Interacts with the SSU processome.

It is found in the nucleus. The catalysed reaction is ATP + H2O = ADP + phosphate + H(+). ATP-dependent rRNA helicase required for pre-ribosomal RNA processing. Involved in the maturation of the 35S-pre-rRNA and to its cleavage to mature 18S rRNA. This chain is ATP-dependent rRNA helicase RRP3, found in Eremothecium gossypii (strain ATCC 10895 / CBS 109.51 / FGSC 9923 / NRRL Y-1056) (Yeast).